A 399-amino-acid chain; its full sequence is Elongation factor Tu (399 aa).

Residues 10–209 (KPHVNIGTIG…AVDEYIPTPE (200 aa)) enclose the tr-type G domain. The G1 stretch occupies residues 19–26 (GHVDHGKT). 19 to 26 (GHVDHGKT) serves as a coordination point for GTP. Thr26 contacts Mg(2+). The tract at residues 60–64 (GITIA) is G2. The tract at residues 81–84 (DCPG) is G3. Residues 81–85 (DCPGH) and 136–139 (NKED) each bind GTP. Positions 136–139 (NKED) are G4. The segment at 174-176 (SAL) is G5.

Belongs to the TRAFAC class translation factor GTPase superfamily. Classic translation factor GTPase family. EF-Tu/EF-1A subfamily. In terms of assembly, monomer.

The protein localises to the cytoplasm. It catalyses the reaction GTP + H2O = GDP + phosphate + H(+). Functionally, GTP hydrolase that promotes the GTP-dependent binding of aminoacyl-tRNA to the A-site of ribosomes during protein biosynthesis. This is Elongation factor Tu from Nitratiruptor sp. (strain SB155-2).